The following is a 130-amino-acid chain: D-ribose pyranase (130 aa).

The active-site Proton donor is H20. Substrate-binding positions include D28, H97, and 119-121; that span reads YAN.

This sequence belongs to the RbsD / FucU family. RbsD subfamily. Homodecamer.

The protein resides in the cytoplasm. It catalyses the reaction beta-D-ribopyranose = beta-D-ribofuranose. The protein operates within carbohydrate metabolism; D-ribose degradation; D-ribose 5-phosphate from beta-D-ribopyranose: step 1/2. Functionally, catalyzes the interconversion of beta-pyran and beta-furan forms of D-ribose. This is D-ribose pyranase from Bacillus pumilus (strain SAFR-032).